Reading from the N-terminus, the 473-residue chain is 6-phosphogluconate dehydrogenase, decarboxylating (473 aa).

NADP(+) contacts are provided by residues 10–15 (GMAVMG), 33–35 (NRT), 74–76 (VKS), and asparagine 102. Substrate contacts are provided by residues asparagine 102 and 128 to 130 (SGG). The Proton acceptor role is filled by lysine 182. 185 to 186 (HN) provides a ligand contact to substrate. Catalysis depends on glutamate 189, which acts as the Proton donor. 5 residues coordinate substrate: tyrosine 190, lysine 260, arginine 287, arginine 446, and histidine 452.

Belongs to the 6-phosphogluconate dehydrogenase family. In terms of assembly, homodimer.

It carries out the reaction 6-phospho-D-gluconate + NADP(+) = D-ribulose 5-phosphate + CO2 + NADPH. It participates in carbohydrate degradation; pentose phosphate pathway; D-ribulose 5-phosphate from D-glucose 6-phosphate (oxidative stage): step 3/3. Its function is as follows. Catalyzes the oxidative decarboxylation of 6-phosphogluconate to ribulose 5-phosphate and CO(2), with concomitant reduction of NADP to NADPH. The protein is 6-phosphogluconate dehydrogenase, decarboxylating (gnd) of Buchnera aphidicola subsp. Schizaphis graminum (strain Sg).